A 347-amino-acid chain; its full sequence is Outer membrane protein A (347 aa).

The first 21 residues, 1 to 21 (MKKQALTIIFLLVSLVTGIQA), serve as a signal peptide directing secretion. A run of 8 beta stranded transmembrane segments spans residues 26 to 36 (HWYLGTKMGWS), 63 to 74 (APVFGLFLGYEF), 78 to 86 (FSFEIENDT), 105 to 116 (NSLQLATKLSYP), 121 to 129 (FHIYTQLGG), 154 to 163 (PNVSLGAEYI), 168 to 175 (FITRLDYT), and 194 to 202 (DVALSFGWK). The interval 207–218 (NINEIFSSYIPQ) is hinge-like. The OmpA-like domain maps to 220–347 (SDKQYVALNE…RRVEIEVLSD (128 aa)). C321 and C333 form a disulfide bridge.

Belongs to the outer membrane OOP (TC 1.B.6) superfamily. OmpA family. Monomer and homodimer.

Its subcellular location is the cell outer membrane. Functionally, with TolR probably plays a role in maintaining the position of the peptidoglycan cell wall in the periplasm. Acts as a porin with low permeability that allows slow penetration of small solutes; an internal gate slows down solute passage. This Buchnera aphidicola subsp. Schizaphis graminum (strain Sg) protein is Outer membrane protein A.